Consider the following 279-residue polypeptide: uncharacterized protein (279 aa).

Residues 1–87 (MRVNGRNLTN…DEYIYLGRQI (87 aa)) enclose the Reverse transcriptase domain.

This is an uncharacterized protein from Caenorhabditis elegans.